A 503-amino-acid chain; its full sequence is uncharacterized protein (503 aa).

Belongs to the Mg-chelatase subunits D/I family. ComM subfamily.

This is an uncharacterized protein from Mycobacterium bovis (strain ATCC BAA-935 / AF2122/97).